The sequence spans 641 residues: Soluble starch synthase 1, chloroplastic/amyloplastic (641 aa).

The transit peptide at 1–113 directs the protein to the chloroplast; the sequence is MATAAGMGIG…DSIDKTIFVA (113 aa). The segment at 62–96 is disordered; that stretch reads TFLVPTSTPPAPTQSPAPAPTPPPLPDSGVGEIEP. The segment covering 68–87 has biased composition (pro residues); it reads STPPAPTQSPAPAPTPPPLP. Lys147 contacts ADP-alpha-D-glucose.

The protein belongs to the glycosyltransferase 1 family. Bacterial/plant glycogen synthase subfamily.

It is found in the plastid. Its subcellular location is the chloroplast. It localises to the amyloplast. It carries out the reaction [(1-&gt;4)-alpha-D-glucosyl](n) + ADP-alpha-D-glucose = [(1-&gt;4)-alpha-D-glucosyl](n+1) + ADP + H(+). It functions in the pathway glycan biosynthesis; starch biosynthesis. The sequence is that of Soluble starch synthase 1, chloroplastic/amyloplastic from Oryza sativa subsp. indica (Rice).